A 100-amino-acid polypeptide reads, in one-letter code: Small ribosomal subunit protein uS14c (100 aa).

This sequence belongs to the universal ribosomal protein uS14 family. As to quaternary structure, part of the 30S ribosomal subunit.

It is found in the plastid. The protein resides in the chloroplast. Functionally, binds 16S rRNA, required for the assembly of 30S particles. This is Small ribosomal subunit protein uS14c from Capsella bursa-pastoris (Shepherd's purse).